A 115-amino-acid polypeptide reads, in one-letter code: Non-specific lipid-transfer protein Cor a 8.0101 (115 aa).

Positions 1–23 (MGSLKLVCAVLLCMMVAAPVARA) are cleaved as a signal peptide. 4 disulfides stabilise this stretch: Cys27-Cys74, Cys37-Cys51, Cys52-Cys97, and Cys72-Cys111.

This sequence belongs to the plant LTP family. In terms of assembly, monomer. Expressed in seed (at protein level). Expressed in seed.

Functionally, plant non-specific lipid-transfer proteins transfer phospholipids as well as galactolipids across membranes. May play a role in wax or cutin deposition in the cell walls of expanding epidermal cells and certain secretory tissues. The sequence is that of Non-specific lipid-transfer protein Cor a 8.0101 from Corylus avellana (European hazel).